Here is a 243-residue protein sequence, read N- to C-terminus: Orotidine 5'-phosphate decarboxylase (243 aa).

Substrate contacts are provided by residues Asp19, Lys41, 69 to 78 (DLKFFDIPAT), Thr124, Arg185, Gln194, Gly214, and Arg215. Catalysis depends on Lys71, which acts as the Proton donor.

Belongs to the OMP decarboxylase family. Type 1 subfamily. Homodimer.

It carries out the reaction orotidine 5'-phosphate + H(+) = UMP + CO2. It participates in pyrimidine metabolism; UMP biosynthesis via de novo pathway; UMP from orotate: step 2/2. In terms of biological role, catalyzes the decarboxylation of orotidine 5'-monophosphate (OMP) to uridine 5'-monophosphate (UMP). This chain is Orotidine 5'-phosphate decarboxylase, found in Xanthomonas oryzae pv. oryzae (strain MAFF 311018).